A 171-amino-acid chain; its full sequence is 3-hydroxydecanoyl-[acyl-carrier-protein] dehydratase (171 aa).

His-70 is an active-site residue.

This sequence belongs to the thioester dehydratase family. FabA subfamily. As to quaternary structure, homodimer.

It localises to the cytoplasm. The catalysed reaction is a (3R)-hydroxyacyl-[ACP] = a (2E)-enoyl-[ACP] + H2O. It carries out the reaction (3R)-hydroxydecanoyl-[ACP] = (2E)-decenoyl-[ACP] + H2O. It catalyses the reaction (2E)-decenoyl-[ACP] = (3Z)-decenoyl-[ACP]. It participates in lipid metabolism; fatty acid biosynthesis. In terms of biological role, necessary for the introduction of cis unsaturation into fatty acids. Catalyzes the dehydration of (3R)-3-hydroxydecanoyl-ACP to E-(2)-decenoyl-ACP and then its isomerization to Z-(3)-decenoyl-ACP. Can catalyze the dehydratase reaction for beta-hydroxyacyl-ACPs with saturated chain lengths up to 16:0, being most active on intermediate chain length. The chain is 3-hydroxydecanoyl-[acyl-carrier-protein] dehydratase from Shewanella pealeana (strain ATCC 700345 / ANG-SQ1).